The chain runs to 119 residues: Holo-[acyl-carrier-protein] synthase (119 aa).

The Mg(2+) site is built by aspartate 8 and glutamate 58.

It belongs to the P-Pant transferase superfamily. AcpS family. Mg(2+) is required as a cofactor.

It localises to the cytoplasm. The catalysed reaction is apo-[ACP] + CoA = holo-[ACP] + adenosine 3',5'-bisphosphate + H(+). Its function is as follows. Transfers the 4'-phosphopantetheine moiety from coenzyme A to a Ser of acyl-carrier-protein. The chain is Holo-[acyl-carrier-protein] synthase from Oceanobacillus iheyensis (strain DSM 14371 / CIP 107618 / JCM 11309 / KCTC 3954 / HTE831).